We begin with the raw amino-acid sequence, 439 residues long: Putative myrosinase 3 (439 aa).

Positions 1-19 are cleaved as a signal peptide; it reads MKFRALGLVLLLAVETCKA. N-linked (GlcNAc...) asparagine glycosylation occurs at Asn-33. Residues His-145, 190–191, and Tyr-316 each bind a beta-D-glucoside; that span reads NQ. The N-linked (GlcNAc...) asparagine glycan is linked to Asn-336. A beta-D-glucoside is bound by residues Glu-386 and Trp-404. Glu-386 acts as the Nucleophile in catalysis.

It belongs to the glycosyl hydrolase 1 family. Expressed specifically in stamens and petals.

It catalyses the reaction a thioglucoside + H2O = a sugar + a thiol.. The protein is Putative myrosinase 3 of Arabidopsis thaliana (Mouse-ear cress).